A 520-amino-acid polypeptide reads, in one-letter code: Cysteine--tRNA ligase (520 aa).

Cys29 lines the Zn(2+) pocket. The short motif at 31-41 (PTVYNYPHLGN) is the 'HIGH' region element. Zn(2+)-binding residues include Cys227, His252, and Glu256. Residues 301–305 (KMSKS) carry the 'KMSKS' region motif. An ATP-binding site is contributed by Lys304.

Belongs to the class-I aminoacyl-tRNA synthetase family. As to quaternary structure, monomer. It depends on Zn(2+) as a cofactor.

The protein localises to the cytoplasm. The enzyme catalyses tRNA(Cys) + L-cysteine + ATP = L-cysteinyl-tRNA(Cys) + AMP + diphosphate. The polypeptide is Cysteine--tRNA ligase (cysS) (Treponema pallidum (strain Nichols)).